Reading from the N-terminus, the 517-residue chain is Ubiquitin carboxyl-terminal hydrolase 30 (517 aa).

At 1-35 (MLSSRAQAARTAADKALQRFLRTGAAVRYKVMKNW) the chain is on the mitochondrial intermembrane side. Residues 36–56 (GVIGGIAAALAAGIYVIWGPI) form a helical membrane-spanning segment. Over 57–517 (TERKKRRKGL…QQGREYRSEE (461 aa)) the chain is Cytoplasmic. One can recognise a USP domain in the interval 68–502 (PGLVNLGNTC…SAYLLFYERV (435 aa)). Catalysis depends on Cys-77, which acts as the Nucleophile. The disordered stretch occupies residues 198–221 (MAPRQVTCHTRGSPHPTTNHWKSQ). Residues 204–218 (TCHTRGSPHPTTNHW) are compositionally biased toward polar residues. Glycyl lysine isopeptide (Lys-Gly) (interchain with G-Cter in ubiquitin) cross-links involve residues Lys-235 and Lys-289. The interval 364-395 (SQHGPKATENPGSAPEVQDAQAAPKPGLSQPG) is disordered. The active-site Proton acceptor is the His-452.

Belongs to the peptidase C19 family. Ubiquitinated by parkin (PRKN) at Lys-235 and Lys-289, leading to its degradation.

The protein resides in the mitochondrion outer membrane. It catalyses the reaction Thiol-dependent hydrolysis of ester, thioester, amide, peptide and isopeptide bonds formed by the C-terminal Gly of ubiquitin (a 76-residue protein attached to proteins as an intracellular targeting signal).. Its activity is regulated as follows. Inhibited by the diterpenoid derivative 15-oxospiramilactone (S3). In terms of biological role, deubiquitinating enzyme tethered to the mitochondrial outer membrane that acts as a key inhibitor of mitophagy by counteracting the action of parkin (PRKN): hydrolyzes ubiquitin attached by parkin on target proteins, such as RHOT1/MIRO1 and TOMM20, thereby blocking parkin's ability to drive mitophagy. Preferentially cleaves 'Lys-6'- and 'Lys-11'-linked polyubiquitin chains, 2 types of linkage that participate in mitophagic signaling. Does not cleave efficiently polyubiquitin phosphorylated at 'Ser-65'. Acts as negative regulator of mitochondrial fusion by mediating deubiquitination of MFN1 and MFN2. The polypeptide is Ubiquitin carboxyl-terminal hydrolase 30 (Usp30) (Mus musculus (Mouse)).